The chain runs to 241 residues: Uridylate kinase (241 aa).

ATP is bound at residue 12 to 15 (KLSG). The segment at 20–25 (GDKGVG) is involved in allosteric activation by GTP. G54 contacts UMP. ATP contacts are provided by G55 and R59. UMP-binding positions include D74 and 135–142 (IGSPYFST). The ATP site is built by N163, Y169, and D172.

Belongs to the UMP kinase family. Homohexamer.

It is found in the cytoplasm. The catalysed reaction is UMP + ATP = UDP + ADP. Its pathway is pyrimidine metabolism; CTP biosynthesis via de novo pathway; UDP from UMP (UMPK route): step 1/1. With respect to regulation, allosterically activated by GTP. Inhibited by UTP. Catalyzes the reversible phosphorylation of UMP to UDP. The polypeptide is Uridylate kinase (Streptococcus gordonii (strain Challis / ATCC 35105 / BCRC 15272 / CH1 / DL1 / V288)).